The sequence spans 372 residues: Methylthioribose-1-phosphate isomerase (372 aa).

The Proton donor role is filled by Asp252.

Belongs to the eIF-2B alpha/beta/delta subunits family. MtnA subfamily.

The protein localises to the cytoplasm. It localises to the nucleus. The enzyme catalyses 5-(methylsulfanyl)-alpha-D-ribose 1-phosphate = 5-(methylsulfanyl)-D-ribulose 1-phosphate. It functions in the pathway amino-acid biosynthesis; L-methionine biosynthesis via salvage pathway; L-methionine from S-methyl-5-thio-alpha-D-ribose 1-phosphate: step 1/6. In terms of biological role, catalyzes the interconversion of methylthioribose-1-phosphate (MTR-1-P) into methylthioribulose-1-phosphate (MTRu-1-P). This Yarrowia lipolytica (strain CLIB 122 / E 150) (Yeast) protein is Methylthioribose-1-phosphate isomerase.